Consider the following 465-residue polypeptide: Putative multidrug resistance protein MdtD (465 aa).

13 helical membrane passes run 12–32 (LWIV…VNTA), 49–69 (SVIV…GWLA), 72–92 (IGVK…SLMC), 102–124 (ILSR…LTVM), 138–158 (FVTL…GFLV), 165–185 (WIFL…LLLM), 195–215 (FDIS…LALD), 219–239 (GLGL…IALG), 267–287 (LVGS…TPIF), 290–310 (IGLG…IIGS), 342–362 (LSLP…VLFF), 393–413 (LLSM…GILL), and 430–450 (SAFL…ALIF).

This sequence belongs to the major facilitator superfamily. TCR/Tet family.

It is found in the cell inner membrane. In Yersinia pseudotuberculosis serotype O:1b (strain IP 31758), this protein is Putative multidrug resistance protein MdtD.